The primary structure comprises 557 residues: Hydroxylamine reductase (557 aa).

4 residues coordinate [4Fe-4S] cluster: Cys-4, Cys-7, Cys-19, and Cys-26. Positions 253, 277, 321, 408, 436, 461, 495, and 497 each coordinate hybrid [4Fe-2O-2S] cluster. Cysteine persulfide is present on Cys-408.

It belongs to the HCP family. Requires [4Fe-4S] cluster as cofactor. Hybrid [4Fe-2O-2S] cluster is required as a cofactor.

The protein resides in the cytoplasm. The enzyme catalyses A + NH4(+) + H2O = hydroxylamine + AH2 + H(+). Catalyzes the reduction of hydroxylamine to form NH(3) and H(2)O. In Acidithiobacillus ferrooxidans (strain ATCC 53993 / BNL-5-31) (Leptospirillum ferrooxidans (ATCC 53993)), this protein is Hydroxylamine reductase.